A 324-amino-acid chain; its full sequence is Acetyl-coenzyme A carboxylase carboxyl transferase subunit alpha (324 aa).

The CoA carboxyltransferase C-terminal domain maps to Ile-37 to Gln-291.

Belongs to the AccA family. In terms of assembly, acetyl-CoA carboxylase is a heterohexamer composed of biotin carboxyl carrier protein (AccB), biotin carboxylase (AccC) and two subunits each of ACCase subunit alpha (AccA) and ACCase subunit beta (AccD).

It localises to the cytoplasm. It carries out the reaction N(6)-carboxybiotinyl-L-lysyl-[protein] + acetyl-CoA = N(6)-biotinyl-L-lysyl-[protein] + malonyl-CoA. It functions in the pathway lipid metabolism; malonyl-CoA biosynthesis; malonyl-CoA from acetyl-CoA: step 1/1. Functionally, component of the acetyl coenzyme A carboxylase (ACC) complex. First, biotin carboxylase catalyzes the carboxylation of biotin on its carrier protein (BCCP) and then the CO(2) group is transferred by the carboxyltransferase to acetyl-CoA to form malonyl-CoA. This Bacillus cytotoxicus (strain DSM 22905 / CIP 110041 / 391-98 / NVH 391-98) protein is Acetyl-coenzyme A carboxylase carboxyl transferase subunit alpha.